The primary structure comprises 308 residues: Transcription initiation factor TFIID subunit 8 (308 aa).

A disordered region spans residues 1–29; that stretch reads MADTAAGPGGSGTRPGSKQSTNPADNYHL. Ala-2 carries the post-translational modification N-acetylalanine. A compositionally biased stretch (polar residues) spans 14-24; it reads RPGSKQSTNPA. The region spanning 35 to 102 is the Histone-fold domain; it reads LQVVVSSLLT…VTLVEMGFNV (68 aa). Thr-128 is subject to Phosphothreonine. Over residues 235-248 the composition is skewed to acidic residues; the sequence is MEETDSSEQEEQTD. Residues 235-308 are disordered; sequence MEETDSSEQE…PKIRRKKSLS (74 aa). Low complexity predominate over residues 268–281; the sequence is ASVLQQSSSLSGSR. At Ser-269 the chain carries Phosphoserine. The Nuclear localization signal signature appears at 292-305; that stretch reads YLRPVKKPKIRRKK. Basic residues predominate over residues 295–308; it reads PVKKPKIRRKKSLS.

Belongs to the TAF8 family. Component of the TFIID basal transcription factor complex, composed of TATA-box-binding protein TBP, and a number of TBP-associated factors (TAFs), including TAF1, TAF2, TAF3, TAF4, TAF5, TAF6, TAF7, TAF8, TAF9, TAF10, TAF11, TAF12 and TAF13. Interacts with TBP, TAF1, TAF6, TAF10, TAF11 and TAF13. Component also of a small TAF complex (SMAT) containing TAF8, TAF10 and SUPT7L. Forms a heterodimer with TAF10. Interaction with TAF10 is mediated mainly via its histone fold domain while interaction with SUPT7L is via its C-terminal region. As to expression, low level of expression throughout the brain with slightly higher expression in the hippocampus.

It is found in the nucleus. It localises to the cytoplasm. The TFIID basal transcription factor complex plays a major role in the initiation of RNA polymerase II (Pol II)-dependent transcription. TFIID recognizes and binds promoters with or without a TATA box via its subunit TBP, a TATA-box-binding protein, and promotes assembly of the pre-initiation complex (PIC). The TFIID complex consists of TBP and TBP-associated factors (TAFs), including TAF1, TAF2, TAF3, TAF4, TAF5, TAF6, TAF7, TAF8, TAF9, TAF10, TAF11, TAF12 and TAF13. The TFIID complex structure can be divided into 3 modules TFIID-A, TFIID-B, and TFIID-C. TAF8 is involved in forming the TFIID-B module, together with TAF5. Mediates both basal and activator-dependent transcription. Plays a role in the differentiation of preadipocyte fibroblasts to adipocytes, however, does not seem to play a role in differentiation of myoblasts. Required for the integration of TAF10 in the TAF complex. May be important for survival of cells of the inner cell mass which constitute the pluripotent cell population of the early embryo. The sequence is that of Transcription initiation factor TFIID subunit 8 (Taf8) from Mus musculus (Mouse).